A 161-amino-acid chain; its full sequence is PHD finger-containing protein 4 (161 aa).

The segment at 30-80 (KKPCEVCGSNANDHAIMTCFLCRDTREHIYCARVHLRSVPRMWICEECRMN) adopts a PHD-type zinc-finger fold. Zn(2+) is bound by residues cysteine 33, cysteine 36, cysteine 48, cysteine 51, histidine 57, cysteine 60, cysteine 74, and cysteine 77. Positions 114-132 (TMTSSDSGNQISATHQQPP) are enriched in polar residues. Residues 114-161 (TMTSSDSGNQISATHQQPPQAHASPVAVPMDTSSSDNQQPPSDSESAI) form a disordered region. Residues 146 to 161 (SSSDNQQPPSDSESAI) are compositionally biased toward low complexity.

Interacts directly with AIPP3/BDT1.

In terms of biological role, together with AIPP3/BDT1, cooperates to form a BAH-PHD bivalent histone reader complex able to read histone H3 lysine 27 trimethylation (H3K27me3) histone marks in order to regulate transcription, especially to prevent early flowering; promotes AIPP3/BDT1 binding to H3K27me3. The polypeptide is PHD finger-containing protein 4 (Arabidopsis thaliana (Mouse-ear cress)).